Reading from the N-terminus, the 562-residue chain is Bacillolysin (562 aa).

A signal peptide spans 1 to 24 (MKKKKQALKVLLSVGILSSSFAFA). The propeptide at 25–245 (HTSSAAPNNV…KQAAKPAAKP (221 aa)) is activation peptide. Residues D303, D305, and D384 each contribute to the Ca(2+) site. H388 serves as a coordination point for Zn(2+). E389 is an active-site residue. H392 and E412 together coordinate Zn(2+). Ca(2+)-binding residues include E423, N429, D431, E433, E436, Y439, T440, and D446. The active-site Proton donor is H477.

The protein belongs to the peptidase M4 family. It depends on Ca(2+) as a cofactor. The cofactor is Zn(2+).

The protein resides in the secreted. It carries out the reaction Similar, but not identical, to that of thermolysin.. Functionally, extracellular zinc metalloprotease. The protein is Bacillolysin of Priestia megaterium (strain ATCC 14581 / DSM 32 / CCUG 1817 / JCM 2506 / NBRC 15308 / NCIMB 9376 / NCTC 10342 / NRRL B-14308 / VKM B-512 / Ford 19) (Bacillus megaterium).